Here is a 428-residue protein sequence, read N- to C-terminus: Enolase (428 aa).

Gln173 lines the (2R)-2-phosphoglycerate pocket. The Proton donor role is filled by Glu217. Mg(2+) is bound by residues Asp253, Glu294, and Asp320. (2R)-2-phosphoglycerate is bound by residues Lys345, Arg374, Ser375, and Lys396. The active-site Proton acceptor is Lys345.

This sequence belongs to the enolase family. The cofactor is Mg(2+).

Its subcellular location is the cytoplasm. It localises to the secreted. It is found in the cell surface. It catalyses the reaction (2R)-2-phosphoglycerate = phosphoenolpyruvate + H2O. Its pathway is carbohydrate degradation; glycolysis; pyruvate from D-glyceraldehyde 3-phosphate: step 4/5. Its function is as follows. Catalyzes the reversible conversion of 2-phosphoglycerate (2-PG) into phosphoenolpyruvate (PEP). It is essential for the degradation of carbohydrates via glycolysis. This chain is Enolase, found in Methanosarcina mazei (strain ATCC BAA-159 / DSM 3647 / Goe1 / Go1 / JCM 11833 / OCM 88) (Methanosarcina frisia).